The sequence spans 271 residues: Putative phosphoenolpyruvate synthase regulatory protein (271 aa).

151-158 (GVSRSGKT) serves as a coordination point for ADP.

The protein belongs to the pyruvate, phosphate/water dikinase regulatory protein family. PSRP subfamily.

The catalysed reaction is [pyruvate, water dikinase] + ADP = [pyruvate, water dikinase]-phosphate + AMP + H(+). The enzyme catalyses [pyruvate, water dikinase]-phosphate + phosphate + H(+) = [pyruvate, water dikinase] + diphosphate. Its function is as follows. Bifunctional serine/threonine kinase and phosphorylase involved in the regulation of the phosphoenolpyruvate synthase (PEPS) by catalyzing its phosphorylation/dephosphorylation. The polypeptide is Putative phosphoenolpyruvate synthase regulatory protein (Burkholderia multivorans (strain ATCC 17616 / 249)).